A 152-amino-acid chain; its full sequence is Ubiquitin-conjugating enzyme E2 W (152 aa).

Residue methionine 1 forms a Peptide (Met-Gly) (interchain with G-Cter in ubiquitin) linkage. In terms of domain architecture, UBC core spans 4–152 (AATRRLMKEL…TRWWFHDDSV (149 aa)). The active-site Glycyl thioester intermediate is the cysteine 92.

The protein belongs to the ubiquitin-conjugating enzyme family.

The enzyme catalyses S-ubiquitinyl-[E1 ubiquitin-activating enzyme]-L-cysteine + [E2 ubiquitin-conjugating enzyme]-L-cysteine = [E1 ubiquitin-activating enzyme]-L-cysteine + S-ubiquitinyl-[E2 ubiquitin-conjugating enzyme]-L-cysteine.. It carries out the reaction S-ubiquitinyl-[E1 ubiquitin-activating enzyme]-L-cysteine + [acceptor protein]-N-terminal-amino acid = [E1 ubiquitin-activating enzyme]-L-cysteine + N-terminal-ubiquitinyl-[acceptor protein].. It participates in protein modification; protein ubiquitination. In terms of biological role, accepts ubiquitin from the E1 complex and catalyzes its covalent attachment to other proteins. Together with ubc-18, required for the ubiquitination of membranous organelles, and the removal of paternal mitochondria from early embryos. The polypeptide is Ubiquitin-conjugating enzyme E2 W (Caenorhabditis elegans).